Reading from the N-terminus, the 325-residue chain is MSETATWQPSASIPNLLKRAAIMTEIRRFFADRGVLEVETPCMSQATVTDIHLVPFETRFVGPGHSQGMNLYMMTSPEYHMKRLLAAGCGPVYQLCRSFRNEEMGRHHNPEFTMLEWYRPHYDMYRLMNEVDDLLQQVLDCAGAETLSYQQVFQRHLEIDPLSADKTQLREAAAKLDLSNVADTEEDRDTLLQLLFAFGVEPHIGKDRPTFVYHFPASQASLAQISTEDHRVAERFEVYYKGIELANGFHELTDAREQQQRFDQDNRKRAARGLPQQPIDTNLLEALKAGLPDSSGVALGVDRLVMLALGAEQLADVIAFTVDRA.

76 to 78 (SPE) is a binding site for substrate. Residues 100–102 (RNE) and Asn-109 contribute to the ATP site. Tyr-118 contributes to the substrate binding site. 244 to 245 (EL) contacts ATP. Glu-251 lines the substrate pocket. Gly-300 is a binding site for ATP.

The protein belongs to the class-II aminoacyl-tRNA synthetase family. EpmA subfamily. As to quaternary structure, homodimer.

The enzyme catalyses D-beta-lysine + L-lysyl-[protein] + ATP = N(6)-((3R)-3,6-diaminohexanoyl)-L-lysyl-[protein] + AMP + diphosphate + H(+). Its function is as follows. With EpmB is involved in the beta-lysylation step of the post-translational modification of translation elongation factor P (EF-P). Catalyzes the ATP-dependent activation of (R)-beta-lysine produced by EpmB, forming a lysyl-adenylate, from which the beta-lysyl moiety is then transferred to the epsilon-amino group of a conserved specific lysine residue in EF-P. This chain is Elongation factor P--(R)-beta-lysine ligase, found in Enterobacter sp. (strain 638).